The sequence spans 204 residues: Thiamine-phosphate synthase (204 aa).

Residues 32–36 (QLRMK) and D64 contribute to the 4-amino-2-methyl-5-(diphosphooxymethyl)pyrimidine site. Mg(2+)-binding residues include D65 and D84. A 4-amino-2-methyl-5-(diphosphooxymethyl)pyrimidine-binding site is contributed by T103. 129–131 (TTT) contributes to the 2-[(2R,5Z)-2-carboxy-4-methylthiazol-5(2H)-ylidene]ethyl phosphate binding site. K132 is a 4-amino-2-methyl-5-(diphosphooxymethyl)pyrimidine binding site. Position 165 (G165) interacts with 2-[(2R,5Z)-2-carboxy-4-methylthiazol-5(2H)-ylidene]ethyl phosphate.

Belongs to the thiamine-phosphate synthase family. It depends on Mg(2+) as a cofactor.

The enzyme catalyses 2-[(2R,5Z)-2-carboxy-4-methylthiazol-5(2H)-ylidene]ethyl phosphate + 4-amino-2-methyl-5-(diphosphooxymethyl)pyrimidine + 2 H(+) = thiamine phosphate + CO2 + diphosphate. It catalyses the reaction 2-(2-carboxy-4-methylthiazol-5-yl)ethyl phosphate + 4-amino-2-methyl-5-(diphosphooxymethyl)pyrimidine + 2 H(+) = thiamine phosphate + CO2 + diphosphate. It carries out the reaction 4-methyl-5-(2-phosphooxyethyl)-thiazole + 4-amino-2-methyl-5-(diphosphooxymethyl)pyrimidine + H(+) = thiamine phosphate + diphosphate. It functions in the pathway cofactor biosynthesis; thiamine diphosphate biosynthesis; thiamine phosphate from 4-amino-2-methyl-5-diphosphomethylpyrimidine and 4-methyl-5-(2-phosphoethyl)-thiazole: step 1/1. In terms of biological role, condenses 4-methyl-5-(beta-hydroxyethyl)thiazole monophosphate (THZ-P) and 2-methyl-4-amino-5-hydroxymethyl pyrimidine pyrophosphate (HMP-PP) to form thiamine monophosphate (TMP). The sequence is that of Thiamine-phosphate synthase from Bacteroides fragilis (strain YCH46).